A 552-amino-acid polypeptide reads, in one-letter code: TBCC domain-containing protein 1 (552 aa).

The C-CAP/cofactor C-like domain maps to Pro304–Leu435.

This sequence belongs to the TBCC family. In terms of tissue distribution, expressed in brain and testis (at protein level).

It localises to the cytoplasm. The protein resides in the cytoskeleton. Its subcellular location is the microtubule organizing center. The protein localises to the centrosome. It is found in the spindle pole. In terms of biological role, plays a role in the regulation of centrosome and Golgi apparatus positioning, with consequences on cell shape and cell migration. This Mus musculus (Mouse) protein is TBCC domain-containing protein 1 (Tbccd1).